Reading from the N-terminus, the 165-residue chain is Phosphopantetheine adenylyltransferase (165 aa).

Serine 9 provides a ligand contact to substrate. ATP is bound by residues 9–10 and histidine 17; that span reads SF. Positions 41, 75, and 89 each coordinate substrate. Residues 90 to 92, glutamate 100, and 125 to 131 contribute to the ATP site; these read GVR and YLFVRSD.

It belongs to the bacterial CoaD family. As to quaternary structure, homohexamer. Mg(2+) serves as cofactor.

The protein localises to the cytoplasm. It catalyses the reaction (R)-4'-phosphopantetheine + ATP + H(+) = 3'-dephospho-CoA + diphosphate. The protein operates within cofactor biosynthesis; coenzyme A biosynthesis; CoA from (R)-pantothenate: step 4/5. In terms of biological role, reversibly transfers an adenylyl group from ATP to 4'-phosphopantetheine, yielding dephospho-CoA (dPCoA) and pyrophosphate. The sequence is that of Phosphopantetheine adenylyltransferase from Borrelia turicatae (strain 91E135).